The chain runs to 159 residues: MSDEEHQFESKADAGASKTYPQQAGTIRKSGYIVIKGRPCKVVEVSTSKTGKHGHAKCHFVAIDIFTGKKLEDIVPSSHNCDVPHVNRTDYQLIDISEDGFVSLLTDNGNTKDDLRLPTDDSLLSQIKDGFAEGKDLVVSVMSAMGEEQINALKDIGPK.

The span at 1 to 12 (MSDEEHQFESKA) shows a compositional bias: basic and acidic residues. Residues 1-21 (MSDEEHQFESKADAGASKTYP) are disordered. Residue lysine 52 is modified to Hypusine.

It belongs to the eIF-5A family. Lys-52 undergoes hypusination, a unique post-translational modification that consists in the addition of a butylamino group from spermidine to lysine side chain, leading to the formation of the unusual amino acid hypusine. eIF-5As are the only known proteins to undergo this modification, which is essential for their function.

Translation factor that promotes translation elongation and termination, particularly upon ribosome stalling at specific amino acid sequence contexts. Binds between the exit (E) and peptidyl (P) site of the ribosome and promotes rescue of stalled ribosome: specifically required for efficient translation of polyproline-containing peptides as well as other motifs that stall the ribosome. Acts as a ribosome quality control (RQC) cofactor by joining the RQC complex to facilitate peptidyl transfer during CAT tailing step. This is Eukaryotic translation initiation factor 5A-4 (EIF5A4) from Solanum tuberosum (Potato).